The following is a 471-amino-acid chain: U1 small nuclear ribonucleoprotein 70 kDa (471 aa).

The segment at 48-78 (FEDPRDAPPPTRAETREERMERKRREKIERR) is disordered. Basic and acidic residues predominate over residues 60-78 (AETREERMERKRREKIERR). The interval 92 to 202 (HNDQNAQGDA…GGGLGGTRRG (111 aa)) is required for interaction with U1 RNA. The region spanning 103–184 (KTLFVARVNY…LVDVERGRTV (82 aa)) is the RRM domain. The disordered stretch occupies residues 187 to 471 (WRPRRLGGGL…NGYMMEPPME (285 aa)). Positions 192–201 (LGGGLGGTRR) are enriched in gly residues. The span at 207-245 (NIRHSGRDDTSRYDERDRDRERERDRRERSRERDKERER) shows a compositional bias: basic and acidic residues. Positions 246-259 (RRSRSRERRRRSRS) are enriched in basic residues. Basic and acidic residues predominate over residues 260 to 293 (REKEERKRSRERSRDKDKDKDKDKDKEKDKDKDR). Residues 294–303 (DRKRRSRSRE) show a composition bias toward basic residues. 2 stretches are compositionally biased toward basic and acidic residues: residues 304-321 (RKRE…RVEG) and 344-428 (IELK…ERVP).

In terms of assembly, component of the U1 snRNP. The U1 snRNP is composed of the U1 snRNA and the 7 core Sm proteins snrpb, snrpd1, snrpd2, snrpd3, snrpe, snrpf and snrpg that assemble in a heptameric protein ring on the Sm site of the small nuclear RNA to form the core snRNP, and at least three U1 snRNP-specific proteins snrnp70/U1-70K, snrpa/U1-A and snrpc/U1-C.

Its subcellular location is the nucleus speckle. The protein resides in the nucleus. It localises to the nucleoplasm. Component of the spliceosomal U1 snRNP, which is essential for recognition of the pre-mRNA 5' splice-site and the subsequent assembly of the spliceosome. snrnp70 binds to the loop I region of U1-snRNA. The polypeptide is U1 small nuclear ribonucleoprotein 70 kDa (snrnp70) (Xenopus tropicalis (Western clawed frog)).